We begin with the raw amino-acid sequence, 202 residues long: Amelogenin (202 aa).

S16 is subject to Phosphoserine. Residues Q77–D202 form a disordered region. Positions P78–P87 are enriched in pro residues. The span at Q101–Y112 shows a compositional bias: low complexity. Residues Q113–P125 show a composition bias toward pro residues. Over residues I126–P158 the composition is skewed to low complexity. The span at P164–P176 shows a compositional bias: pro residues.

Belongs to the amelogenin family.

The protein resides in the secreted. It is found in the extracellular space. It localises to the extracellular matrix. Plays a role in the biomineralization of teeth. Seems to regulate the formation of crystallites during the secretory stage of tooth enamel development. Thought to play a major role in the structural organization and mineralization of developing enamel. The protein is Amelogenin (AMEL) of Monodelphis domestica (Gray short-tailed opossum).